Reading from the N-terminus, the 577-residue chain is Arginine--tRNA ligase (577 aa).

Residues 122–132 carry the 'HIGH' region motif; sequence PNVAKEMHVGH.

It belongs to the class-I aminoacyl-tRNA synthetase family. Monomer.

The protein localises to the cytoplasm. The enzyme catalyses tRNA(Arg) + L-arginine + ATP = L-arginyl-tRNA(Arg) + AMP + diphosphate. This chain is Arginine--tRNA ligase, found in Haemophilus influenzae (strain PittGG).